Reading from the N-terminus, the 110-residue chain is UPF0122 protein SMU_1061 (110 aa).

It belongs to the UPF0122 family.

Functionally, might take part in the signal recognition particle (SRP) pathway. This is inferred from the conservation of its genetic proximity to ftsY/ffh. May be a regulatory protein. This is UPF0122 protein SMU_1061 (ylxM) from Streptococcus mutans serotype c (strain ATCC 700610 / UA159).